The sequence spans 875 residues: Phospholipase DDHD1 (875 aa).

Disordered stretches follow at residues 1-30 (MNYPGHGSPRSSERNGGRGGDGAAWELGSD), 101-153 (LRYY…GAAA), and 206-231 (RAQDPDGDHVCGPASPAGPASSSVED). A phosphoserine mark is found at Ser8 and Ser11. A compositionally biased stretch (gly residues) spans 130–140 (SGGGGAAGGGP). Positions 217–228 (GPASPAGPASSS) are enriched in low complexity. Ser540 is a catalytic residue. A DDHD domain is found at 614 to 861 (LKFKVENFFC…ALFLLTFMYK (248 aa)). Phosphoserine is present on Ser726. A disordered region spans residues 770–804 (RSSASQPSETSRDSIEDEKKPVASPPMTTVATQTL). Residues 779–790 (TSRDSIEDEKKP) show a composition bias toward basic and acidic residues. The segment covering 795–804 (PMTTVATQTL) has biased composition (polar residues).

The protein belongs to the PA-PLA1 family. As to quaternary structure, forms homooligomers and, to a much smaller extent, heterooligomers with DDHD2. Interacts with SEC23A and SEC24C. In terms of tissue distribution, expressed in mature testis.

Its subcellular location is the cytoplasm. The catalysed reaction is a 1,2-diacyl-sn-glycero-3-phosphate + H2O = a 2-acyl-sn-glycerol 3-phosphate + a fatty acid + H(+). It catalyses the reaction a 1,2-diacyl-sn-glycero-3-phospho-(1D-myo-inositol) + H2O = a 2-acyl-sn-glycero-3-phospho-D-myo-inositol + a fatty acid + H(+). It carries out the reaction 1-octadecanoyl-2-(5Z,8Z,11Z,14Z-eicosatetraenoyl)-sn-glycero-3-phospho-(1D-myo-inositol) + H2O = 2-(5Z,8Z,11Z,14Z-eicosatetraenoyl)-sn-glycero-3-phospho-(1D-myo-inositol) + octadecanoate + H(+). The enzyme catalyses a 1-acyl-2-(5Z,8Z,11Z,14Z-eicosatetraenoyl)-sn-glycero-3-phospho-(1D-myo-inositol) + H2O = 2-(5Z,8Z,11Z,14Z-eicosatetraenoyl)-sn-glycero-3-phospho-(1D-myo-inositol) + a fatty acid + H(+). The catalysed reaction is 1,2-dihexadecanoyl-sn-glycero-3-phospho-(1D-myo-inositol) + H2O = 2-hexadecanoyl-sn-glycero-3-phospho-(1D-myo-inositol) + hexadecanoate + H(+). It catalyses the reaction 1,2-di-(9Z-octadecenoyl)-sn-glycero-3-phosphate + H2O = 2-(9Z-octadecenoyl)-sn-glycero-3-phosphate + (9Z)-octadecenoate + H(+). It carries out the reaction a 1-acyl-2-(5Z,8Z,11Z,14Z)-eicosatetraenoyl-sn-glycero-3-phosphate + H2O = 2-(5Z,8Z,11Z,14Z-eicosatetraenoyl)-sn-glycero-3-phosphate + a fatty acid + H(+). The enzyme catalyses 1-hexadecanoyl-2-(9Z-octadecenoyl)-sn-glycero-3-phosphate + H2O = 2-(9Z-octadecenoyl)-sn-glycero-3-phosphate + hexadecanoate + H(+). The catalysed reaction is 1-hexadecanoyl-2-(9Z-octadecenoyl)-sn-glycero-3-phospho-L-serine + H2O = 2-(9Z-octadecenoyl)-sn-glycero-3-phospho-L-serine + hexadecanoate + H(+). It catalyses the reaction 1,2-di-(5Z,8Z,11Z,14Z)-eicosatetraenoyl-sn-glycero-3-phosphate + H2O = 2-(5Z,8Z,11Z,14Z-eicosatetraenoyl)-sn-glycero-3-phosphate + (5Z,8Z,11Z,14Z)-eicosatetraenoate + H(+). It carries out the reaction 1-octadecanoyl-2-(5Z,8Z,11Z,14Z-eicosatetraenoyl)-sn-glycero-3-phosphate + H2O = 2-(5Z,8Z,11Z,14Z-eicosatetraenoyl)-sn-glycero-3-phosphate + octadecanoate + H(+). The enzyme catalyses a 1,2-diacyl-sn-glycero-3-phosphocholine + H2O = a 2-acyl-sn-glycero-3-phosphocholine + a fatty acid + H(+). The catalysed reaction is a 1,2-diacyl-sn-glycero-3-phosphoethanolamine + H2O = a 2-acyl-sn-glycero-3-phosphoethanolamine + a fatty acid + H(+). It catalyses the reaction a 1,2-diacyl-sn-glycero-3-phospho-L-serine + H2O = a 2-acyl-sn-glycero-3-phospho-L-serine + a fatty acid + H(+). It carries out the reaction a 1,2-diacyl-sn-glycero-3-phospho-(1'-sn-glycerol) + H2O = 2-acyl-sn-glycero-3-phospho-(1'-sn-glycerol) + a fatty acid + H(+). The enzyme catalyses 1-hexadecanoyl-2-(9Z-octadecenoyl)-sn-glycero-3-phospho-(1'-sn-glycerol) + H2O = 2-(9Z-octadecenoyl)-sn-glycero-3-phospho-(1'-sn-glycerol) + hexadecanoate + H(+). The catalysed reaction is 1-acyl-2-(5Z,8Z,11Z,14Z-eicosatetraenoyl)-sn-glycero-3-phosphocholine + H2O = 2-(5Z,8Z,11Z,14Z)-eicosatetraenoyl-sn-glycero-3-phosphocholine + a fatty acid + H(+). It catalyses the reaction 1-acyl-2-(5Z,8Z,11Z,14Z)-eicosatetraenoyl-sn-glycero-3-phosphoethanolamine + H2O = 2-(5Z,8Z,11Z,14Z)-eicosatetraenoyl-sn-glycero-3-phosphoethanolamine + a fatty acid + H(+). It carries out the reaction 1-(9Z-octadecenoyl)-2-(7Z,10Z,13Z,16Z,19Z-docosapentaenoyl)-sn-glycero-3-phospho-1D-myo-inositol + H2O = 2-(7Z,10Z,13Z,16Z,19Z-docosapentaenoyl)-sn-glycero-3-phospho-1D-myo-inositol + (9Z)-octadecenoate + H(+). The enzyme catalyses 1-(9Z-octadecenoyl)-2-(5Z,8Z,11Z,14Z-eicosatetraenoyl)-sn-glycero-3-phospho-1D-myo-inositol + H2O = 2-(5Z,8Z,11Z,14Z-eicosatetraenoyl)-sn-glycero-3-phospho-(1D-myo-inositol) + (9Z)-octadecenoate + H(+). The catalysed reaction is 1,2-di-(9Z-octadecenoyl)-sn-glycero-3-phospho-1D-myo-inositol + H2O = 2-(9Z-octadecenoyl)-sn-glycero-3-phospho-1D-myo-inositol + (9Z)-octadecenoate + H(+). It catalyses the reaction 1-(9Z-octadecenoyl)-2-(8Z,11Z,14Z-eicosatrienoyl)-sn-glycero-3-phospho-1D-myo-inositol + H2O = 2-(8Z,11Z,14Z-eicosatrienoyl)-sn-glycero-3-phospho-1D-myo-inositol + (9Z)-octadecenoate + H(+). It carries out the reaction 1,2-di-(9Z-octadecenoyl)-sn-glycero-3-phosphocholine + H2O = (9Z-octadecenoyl)-sn-glycero-3-phosphocholine + (9Z)-octadecenoate + H(+). It functions in the pathway phospholipid metabolism; phosphatidylinositol metabolism. Functionally, phospholipase A1 (PLA1) that hydrolyzes ester bonds at the sn-1 position of glycerophospholipids producing a free fatty acid and a lysophospholipid. Prefers phosphatidate (1,2-diacyl-sn-glycero-3-phosphate, PA) as substrate in vitro, but can efficiently hydrolyze phosphatidylinositol (1,2-diacyl-sn-glycero-3-phospho-(1D-myo-inositol), PI), as well as a range of other glycerophospholipid substrates such as phosphatidylcholine (1,2-diacyl-sn-glycero-3-phosphocholine, PC), phosphatidylethanolamine (1,2-diacyl-sn-glycero-3-phosphoethanolamine, PE), phosphatidylserine (1,2-diacyl-sn-glycero-3-phospho-L-serine, PS) and phosphatidylglycerol (1,2-diacyl-sn-glycero-3-phospho-(1'-sn-glycerol), PG). Involved in the regulation of the endogenous content of polyunsaturated PI and PS lipids in the nervous system. Changes in these lipids extend to downstream metabolic products like PI phosphates PIP and PIP2, which play fundamental roles in cell biology. Regulates mitochondrial morphology. These dynamic changes may be due to PA hydrolysis at the mitochondrial surface. May play a regulatory role in spermatogenesis or sperm function. The sequence is that of Phospholipase DDHD1 (DDHD1) from Bos taurus (Bovine).